A 491-amino-acid chain; its full sequence is Protein DETOXIFICATION 56 (491 aa).

A run of 12 helical transmembrane segments spans residues 39-59, 72-92, 111-131, 154-174, 181-201, 212-232, 261-281, 291-311, 336-356, 379-399, 409-429, and 438-458; these read LPLVVMNLLWFGKMTTTSVFL, LGFSFANVTGFSVLYGISAAM, TLFMAVLLLLLISVPISFLWL, LLYLLPELPILSFLCPLKAYL, LPIMFTTAAATSLHIPINIVL, MAVWITDFIVVILLTGYVIVV, GPCCLTVCLEWWCYEILVLLT, VSILIIVFNFDYLLYAVMLSL, YTTLIVGIISGCIGALVMIAF, MLIMAVIEVVNFPLMVCGEIV, MYANLSGFYLLALPLGATLAF, and FLIGLFVGISLCLSILLIFIA.

It belongs to the multi antimicrobial extrusion (MATE) (TC 2.A.66.1) family. Interacts with BCA4 and HT1. As to expression, preferentially expressed in guard cells.

The protein resides in the cell membrane. Could function as a HCO(3)(-) -sensing component in the CO(2) signaling pathway in guard cells. Acts as an upstream repressor of HT1. Plays a role in stomatal response to CO(2). The chain is Protein DETOXIFICATION 56 from Arabidopsis thaliana (Mouse-ear cress).